Reading from the N-terminus, the 138-residue chain is Small ribosomal subunit protein uS11c (138 aa).

The tract at residues 1–22 is disordered; sequence MAKLLPRIGSRKNGRISSRKNA. Residues 9–22 show a composition bias toward basic residues; it reads GSRKNGRISSRKNA.

The protein belongs to the universal ribosomal protein uS11 family. Part of the 30S ribosomal subunit.

Its subcellular location is the plastid. It localises to the chloroplast. This chain is Small ribosomal subunit protein uS11c, found in Populus alba (White poplar).